A 378-amino-acid polypeptide reads, in one-letter code: 5-amino-6-(D-ribitylamino)uracil--L-tyrosine 4-hydroxyphenyl transferase (378 aa).

In terms of domain architecture, Radical SAM core spans 59–306; it reads VTYVINRNIN…TAVARIYLGN (248 aa). [4Fe-4S] cluster-binding residues include cysteine 73, cysteine 77, and cysteine 80.

Belongs to the radical SAM superfamily. CofH family. As to quaternary structure, consists of two subunits, CofG and CofH. The cofactor is [4Fe-4S] cluster.

It carries out the reaction 5-amino-6-(D-ribitylamino)uracil + L-tyrosine + S-adenosyl-L-methionine = 5-amino-5-(4-hydroxybenzyl)-6-(D-ribitylimino)-5,6-dihydrouracil + 2-iminoacetate + 5'-deoxyadenosine + L-methionine + H(+). The protein operates within cofactor biosynthesis; coenzyme F0 biosynthesis. Functionally, catalyzes the radical-mediated synthesis of 5-amino-5-(4-hydroxybenzyl)-6-(D-ribitylimino)-5,6-dihydrouracil from 5-amino-6-(D-ribitylamino)uracil and L-tyrosine. This is 5-amino-6-(D-ribitylamino)uracil--L-tyrosine 4-hydroxyphenyl transferase from Microcystis aeruginosa (strain NIES-843 / IAM M-2473).